The sequence spans 224 residues: Ribose-5-phosphate isomerase A (224 aa).

Residues 26–29 (TGST), 82–85 (DGAD), and 95–98 (KGGG) contribute to the substrate site. Glutamate 104 acts as the Proton acceptor in catalysis. Lysine 122 is a substrate binding site.

The protein belongs to the ribose 5-phosphate isomerase family. In terms of assembly, homodimer.

The enzyme catalyses aldehydo-D-ribose 5-phosphate = D-ribulose 5-phosphate. It participates in carbohydrate degradation; pentose phosphate pathway; D-ribose 5-phosphate from D-ribulose 5-phosphate (non-oxidative stage): step 1/1. In terms of biological role, catalyzes the reversible conversion of ribose-5-phosphate to ribulose 5-phosphate. The sequence is that of Ribose-5-phosphate isomerase A from Streptococcus suis (strain 98HAH33).